Consider the following 535-residue polypeptide: T-complex protein 1 subunit beta (535 aa).

A2 is modified (N-acetylalanine). S3 bears the Phosphoserine mark. Residue K13 is modified to N6-acetyllysine. G44 provides a ligand contact to ADP. G44 lines the ATP pocket. D97 contributes to the Mg(2+) binding site. G98, T99, T100, S101, S168, and S169 together coordinate ADP. ATP contacts are provided by G98, T99, and T100. K181 bears the N6-acetyllysine mark. K248 participates in a covalent cross-link: Glycyl lysine isopeptide (Lys-Gly) (interchain with G-Cter in SUMO2). S260 bears the Phosphoserine mark. T261 is modified (phosphothreonine). ADP-binding residues include G410, E495, and K500. Positions 495 and 500 each coordinate ATP.

It belongs to the TCP-1 chaperonin family. In terms of assembly, component of the chaperonin-containing T-complex (TRiC), a hexadecamer composed of two identical back-to-back stacked rings enclosing a protein folding chamber. Each ring is made up of eight different subunits: TCP1/CCT1, CCT2, CCT3, CCT4, CCT5, CCT6A/CCT6, CCT7, CCT8. Interacts with PACRG. Interacts with FLCN. Interacts with DLEC1. Interacts with SVEP1. Post-translationally, the N-terminus is blocked.

It localises to the cytoplasm. It carries out the reaction ATP + H2O = ADP + phosphate + H(+). Functionally, component of the chaperonin-containing T-complex (TRiC), a molecular chaperone complex that assists the folding of actin, tubulin and other proteins upon ATP hydrolysis. The TRiC complex mediates the folding of WRAP53/TCAB1, thereby regulating telomere maintenance. As part of the TRiC complex may play a role in the assembly of BBSome, a complex involved in ciliogenesis regulating transports vesicles to the cilia. The polypeptide is T-complex protein 1 subunit beta (Cct2) (Mus musculus (Mouse)).